A 290-amino-acid chain; its full sequence is RWD domain-containing protein 2B (290 aa).

The RWD domain occupies 12 to 136; it reads SELDLLASMF…EWVKEHAFDY (125 aa).

This Mus musculus (Mouse) protein is RWD domain-containing protein 2B (Rwdd2b).